Consider the following 486-residue polypeptide: UDP-N-acetylmuramate--L-alanine ligase (486 aa).

126–132 (GTHGKTS) lines the ATP pocket.

It belongs to the MurCDEF family.

Its subcellular location is the cytoplasm. It catalyses the reaction UDP-N-acetyl-alpha-D-muramate + L-alanine + ATP = UDP-N-acetyl-alpha-D-muramoyl-L-alanine + ADP + phosphate + H(+). It participates in cell wall biogenesis; peptidoglycan biosynthesis. Functionally, cell wall formation. The polypeptide is UDP-N-acetylmuramate--L-alanine ligase (Corynebacterium glutamicum (strain R)).